A 480-amino-acid polypeptide reads, in one-letter code: Beta-glucosidase A (480 aa).

The active-site Proton donor is the Glu177. Catalysis depends on Glu378, which acts as the Nucleophile.

The protein belongs to the glycosyl hydrolase 1 family.

The enzyme catalyses Hydrolysis of terminal, non-reducing beta-D-glucosyl residues with release of beta-D-glucose.. The sequence is that of Beta-glucosidase A (bglA) from Enterobacter agglomerans (Erwinia herbicola).